The following is a 501-amino-acid chain: MAKDTALHLPLGLESVGWVLGLLTTSILYLFLSPRSQIPRPPVVNKYWWDFFQIKAKRDFDARAEDLIKLGLSKARAKNTERRFGPRLVLSDKLADAVGMDNRFDQNKGIAPVNLVELRGFESMFSAALHDSVPRPATSATSKRLVHLTQPFSEETTDFLQREWTESPDWHEIVVYPVMSRLTAQVLSRAFVGPKLCRDARWLDIATTYVSHRMTAAVAVQKWGTVLQPIVHWFLPSCRRLRAHIQRARELIQPELDRIKENPLEDETFTSLAWIHGFAQGYIYDAGLAQLRLTAVANHTTSDMVTKILIRICENPELIQPLRDEAIEAVRGGRLRVAALQKMFLMESVMKESQRLEPFFLLSMFRYATETVILPGGTAIPQGTLLTVANPSRLDPAIYPDPEKFDGYRFVRMREDPENAHLAPFTKTNPTNLNFGHGKQACPGRFIAVNQIKIALCHILLKYDVELVEECPSQLIRSGLLTVRNPGAKIRVRRRQEEVSL.

Residues 11–31 form a helical membrane-spanning segment; that stretch reads LGLESVGWVLGLLTTSILYLF. An N-linked (GlcNAc...) asparagine glycan is attached at N298. C442 contacts heme.

It belongs to the cytochrome P450 family. Requires heme as cofactor.

It localises to the membrane. It functions in the pathway alkaloid biosynthesis. Functionally, cytochrome P450 monooxygenase; part of the gene cluster that mediates the biosynthesis of notoamide, a fungal indole alkaloid that belongs to a family of natural products containing a characteristic bicyclo[2.2.2]diazaoctane core. The first step of notoamide biosynthesis involves coupling of L-proline and L-tryptophan by the bimodular NRPS notE, to produce cyclo-L-tryptophan-L-proline called brevianamide F. The reverse prenyltransferase notF then acts as a deoxybrevianamide E synthase and converts brevianamide F to deoxybrevianamide E via reverse prenylation at C-2 of the indole ring leading to the bicyclo[2.2.2]diazaoctane core. Deoxybrevianamide E is further hydroxylated at C-6 of the indole ring, likely catalyzed by the cytochrome P450 monooxygenase notG, to yield 6-hydroxy-deoxybrevianamide E. 6-hydroxy-deoxybrevianamide E is a specific substrate of the prenyltransferase notC for normal prenylation at C-7 to produce 6-hydroxy-7-prenyl-deoxybrevianamide, also called notoamide S. As the proposed pivotal branching point in notoamide biosynthesis, notoamide S can be diverted to notoamide E through an oxidative pyran ring closure putatively catalyzed by either notH cytochrome P450 monooxygenase or the notD FAD-linked oxidoreductase. This step would be followed by an indole 2,3-epoxidation-initiated pinacol-like rearrangement catalyzed by the notB FAD-dependent monooxygenase leading to the formation of notoamide C and notoamide D. On the other hand notoamide S is converted to notoamide T by notH (or notD), a bifunctional oxidase that also functions as the intramolecular Diels-Alderase responsible for generation of (+)-notoamide T. To generate antipodal (-)-notoaminide T, notH' (or notD') in Aspergillus versicolor is expected to catalyze a Diels-Alder reaction leading to the opposite stereochemistry. The remaining oxidoreductase notD (or notH) likely catalyzes the oxidative pyran ring formation to yield (+)-stephacidin A. The FAD-dependent monooxygenase notI is highly similar to notB and is predicted to catalyze a similar conversion from (+)-stephacidin A to (-)-notoamide B via the 2,3-epoxidation of (+)-stephacidin A followed by a pinacol-type rearrangement. Finally, it remains unclear which enzyme could be responsible for the final hydroxylation steps leading to notoamide A and sclerotiamide. The protein is Cytochrome P450 monooxygenase notH of Aspergillus sp. (strain MF297-2).